Consider the following 219-residue polypeptide: Deoxyribose-phosphate aldolase (219 aa).

Aspartate 88 (proton donor/acceptor) is an active-site residue. Lysine 150 functions as the Schiff-base intermediate with acetaldehyde in the catalytic mechanism. The active-site Proton donor/acceptor is lysine 179.

The protein belongs to the DeoC/FbaB aldolase family. DeoC type 1 subfamily.

Its subcellular location is the cytoplasm. It carries out the reaction 2-deoxy-D-ribose 5-phosphate = D-glyceraldehyde 3-phosphate + acetaldehyde. It participates in carbohydrate degradation; 2-deoxy-D-ribose 1-phosphate degradation; D-glyceraldehyde 3-phosphate and acetaldehyde from 2-deoxy-alpha-D-ribose 1-phosphate: step 2/2. Its function is as follows. Catalyzes a reversible aldol reaction between acetaldehyde and D-glyceraldehyde 3-phosphate to generate 2-deoxy-D-ribose 5-phosphate. This is Deoxyribose-phosphate aldolase from Aquifex aeolicus (strain VF5).